Consider the following 41-residue polypeptide: Large ribosomal subunit protein bL36 (41 aa).

It belongs to the bacterial ribosomal protein bL36 family.

The polypeptide is Large ribosomal subunit protein bL36 (Rickettsia massiliae (strain Mtu5)).